The chain runs to 419 residues: Tyrosine--tRNA ligase (419 aa).

Residue Tyr-34 coordinates L-tyrosine. Residues 39-48 (PTADSLHLGN) carry the 'HIGH' region motif. L-tyrosine contacts are provided by Tyr-169 and Gln-173. The short motif at 229 to 233 (KFGKS) is the 'KMSKS' region element. Residue Lys-232 coordinates ATP. Residues 353 to 419 (LTLIELLISA…GKKKNFVLTY (67 aa)) form the S4 RNA-binding domain.

The protein belongs to the class-I aminoacyl-tRNA synthetase family. TyrS type 1 subfamily. In terms of assembly, homodimer.

It is found in the cytoplasm. The catalysed reaction is tRNA(Tyr) + L-tyrosine + ATP = L-tyrosyl-tRNA(Tyr) + AMP + diphosphate + H(+). In terms of biological role, catalyzes the attachment of tyrosine to tRNA(Tyr) in a two-step reaction: tyrosine is first activated by ATP to form Tyr-AMP and then transferred to the acceptor end of tRNA(Tyr). In Lactococcus lactis subsp. cremoris (strain SK11), this protein is Tyrosine--tRNA ligase.